The chain runs to 274 residues: MPFRSNNPLTRDELLSRFFPQFHPVTTFNSGLSGGSFLIEHQGQRFVVRQPHDPDAPQSAFLRQYRALSQLPACIAPKPHLYLRDWMVVDYLPGEVKTYLPDTNELAGLLYYLHQQPRFGWRITLLPLLELYWQQSDPARRTVGWLRMLKRLRKAREPRLLRLSPLHMDVHAGNLVHSASGLKLIDWEYAGDGDIALELAAVWVENIDQHRQLVNDYATRAKIYPAQLWRQVRRWFPWLLMLKAGWFEYRWRQTGDQQFIRLADDTWRQLLIKQ.

It belongs to the thiamine kinase family.

It carries out the reaction thiamine + ATP = thiamine phosphate + ADP + H(+). It participates in cofactor biosynthesis; thiamine diphosphate biosynthesis; thiamine phosphate from thiamine: step 1/1. Catalyzes the ATP-dependent phosphorylation of thiamine to thiamine phosphate. Is involved in thiamine salvage. In Escherichia coli O45:K1 (strain S88 / ExPEC), this protein is Thiamine kinase.